We begin with the raw amino-acid sequence, 428 residues long: Histone deacetylase 3 (428 aa).

The tract at residues 3-316 (KTVAYFYDPD…WTYETSLLVE (314 aa)) is histone deacetylase. 3 residues coordinate 1D-myo-inositol 1,4,5,6-tetrakisphosphate: H17, G21, and K25. H135 is an active-site residue. Zn(2+) contacts are provided by D170, H172, and D259. R265 contacts 1D-myo-inositol 1,4,5,6-tetrakisphosphate. Basic and acidic residues-rich tracts occupy residues 388–405 (DRTD…ENYS) and 415–428 (DGDH…DVEI). The interval 388 to 428 (DRTDEADAEERGPEENYSRPEAPNEFYDGDHDNDKESDVEI) is disordered. A Phosphoserine modification is found at S424.

It belongs to the histone deacetylase family. HD type 1 subfamily. In terms of assembly, interacts with HDAC7 and HDAC9. Interacts with DAXX, KDM4A, HDAC10 and DACH1. Found in a complex with NCOR1 and NCOR2. Component of the N-Cor repressor complex, at least composed of NCOR1, NCOR2, HDAC3, TBL1X, TBL1R, CORO2A and GPS2. Interacts with BCOR, MJD2A/JHDM3A, NRIP1, PRDM6 and SRY. Interacts with BTBD14B. Interacts with GLIS2. Interacts (via the DNA-binding domain) with NR2C1; the interaction recruits phosphorylated NR2C1 to PML bodies for sumoylation. Component of the Notch corepressor complex. Interacts with CBFA2T3 and NKAP. Interacts with APEX1; the interaction is not dependent on the acetylated status of APEX1. Interacts with ZMYND15. Interacts with SMRT/NCOR2 and BCL6 on DNA enhancer elements. Interacts with INSM1. Interacts with XBP1 isoform 1; the interaction occurs in endothelial cell (EC) under disturbed flow. Interacts (via C-terminus) with CCAR2 (via N-terminus). Interacts with and deacetylates MEF2D. Interacts with BEND3. Interacts with NKAPL. Interacts with DHX36; this interaction occurs in a RNA-dependent manner. Interacts weakly with CRY1; this interaction is enhanced in the presence of FBXL3. Interacts with FBXL3 and BMAL1. Interacts with NCOR1. Interacts with RARA. Interacts with SETD5. Sumoylated in vitro. Post-translationally, deubiquitinated on 'Lys-63'-linked ubiquitin chains by USP38; leading to a decreased level of histone acetylation.

Its subcellular location is the nucleus. It is found in the chromosome. The protein localises to the cytoplasm. The protein resides in the cytosol. The enzyme catalyses N(6)-acetyl-L-lysyl-[histone] + H2O = L-lysyl-[histone] + acetate. It carries out the reaction N(6)-acetyl-L-lysyl-[protein] + H2O = L-lysyl-[protein] + acetate. It catalyses the reaction N(6)-(2E)-butenoyl-L-lysyl-[protein] + H2O = (2E)-2-butenoate + L-lysyl-[protein]. The catalysed reaction is N(6)-(2-hydroxyisobutanoyl)-L-lysyl-[protein] + H2O = 2-hydroxy-2-methylpropanoate + L-lysyl-[protein]. The enzyme catalyses N(6)-[(S)-lactoyl]-L-lysyl-[protein] + H2O = (S)-lactate + L-lysyl-[protein]. Its activity is regulated as follows. Inositol tetraphosphate (1D-myo-inositol 1,4,5,6-tetrakisphosphate) promotes the histone deacetylase activity by acting as an intermolecular glue between HDAC3 and NCOR2, thereby promoting its association with the N-Cor complex, a prerequisite for the histone deacetylase activity. Functionally, histone deacetylase that catalyzes the deacetylation of lysine residues on the N-terminal part of the core histones (H2A, H2B, H3 and H4), and some other non-histone substrates. Histone deacetylation gives a tag for epigenetic repression and plays an important role in transcriptional regulation, cell cycle progression and developmental events. Histone deacetylases act via the formation of large multiprotein complexes, such as N-Cor repressor complex, which activate the histone deacetylase activity. Participates in the BCL6 transcriptional repressor activity by deacetylating the H3 'Lys-27' (H3K27) on enhancer elements, antagonizing EP300 acetyltransferase activity and repressing proximal gene expression. Acts as a molecular chaperone for shuttling phosphorylated NR2C1 to PML bodies for sumoylation. Contributes, together with XBP1 isoform 1, to the activation of NFE2L2-mediated HMOX1 transcription factor gene expression in a PI(3)K/mTORC2/Akt-dependent signaling pathway leading to endothelial cell (EC) survival under disturbed flow/oxidative stress. Regulates both the transcriptional activation and repression phases of the circadian clock in a deacetylase activity-independent manner. During the activation phase, promotes the accumulation of ubiquitinated BMAL1 at the E-boxes and during the repression phase, blocks FBXL3-mediated CRY1/2 ubiquitination and promotes the interaction of CRY1 and BMAL1. The NCOR1-HDAC3 complex regulates the circadian expression of the core clock gene BMAL1 and the genes involved in lipid metabolism in the liver. Also functions as deacetylase for non-histone targets, such as KAT5, MEF2D, MAPK14, RARA and STAT3. Serves as a corepressor of RARA, mediating its deacetylation and repression, leading to inhibition of RARE DNA element binding. In addition to protein deacetylase activity, also acts as a protein-lysine deacylase by recognizing other acyl groups: catalyzes removal of (2E)-butenoyl (crotonyl), lactoyl (lactyl) and 2-hydroxyisobutanoyl (2-hydroxyisobutyryl) acyl groups from lysine residues, leading to protein decrotonylation, delactylation and de-2-hydroxyisobutyrylation, respectively. Catalyzes decrotonylation of MAPRE1/EB1. Mediates delactylation NBN/NBS1, thereby inhibiting DNA double-strand breaks (DSBs) via homologous recombination (HR). This Mus musculus (Mouse) protein is Histone deacetylase 3.